Reading from the N-terminus, the 336-residue chain is Vomeronasal type-1 receptor 102 (336 aa).

Residues 1-42 (MVGVQICQGMTSEILFFSLQPQFSNMMNKNSRLHIDSNIRNT) lie on the Extracellular side of the membrane. The helical transmembrane segment at 43 to 63 (FFTEIGIGVSANSLLLLFNIF) threads the bilayer. The Cytoplasmic portion of the chain corresponds to 64 to 75 (KFIHGQRSRLTD). Residues 76 to 96 (LPIGLLSLINLLMLLIMACIA) form a helical membrane-spanning segment. Residues 97-120 (TDIFISCRRWDDIICKSLLYLYRT) lie on the Extracellular side of the membrane. Cys111 and Cys198 are oxidised to a cystine. A helical transmembrane segment spans residues 121–140 (FRGLSLSTTCLLSVLQAIIL). The Cytoplasmic portion of the chain corresponds to 141-157 (SPRSSCLAKYKHKPPHH). Residues 158–178 (IFCAMLFLSVLYMFISSHLLL) form a helical membrane-spanning segment. Over 179 to 213 (SIIATPNLTTNDFIHVSQSCSILPMSYLMQSMFST) the chain is Extracellular. A glycan (N-linked (GlcNAc...) asparagine) is linked at Asn185. Residues 214 to 234 (LLAIRNVFLISLIVLSTWYMV) form a helical membrane-spanning segment. Residues 235–264 (ALLCRHRKQTRHLQDTSLSRKASPEQRATR) lie on the Cytoplasmic side of the membrane. Residues 265 to 285 (SILMLRSLFVLMSIFDSIVSC) form a helical membrane-spanning segment. Over 286–296 (SRTMYLNDPTS) the chain is Extracellular. The helical transmembrane segment at 297–317 (YSIQLLVVHIYATVSPFVFMI) threads the bilayer. The Cytoplasmic portion of the chain corresponds to 318 to 336 (TEKHIVNYLKSMYVRVLNV).

The protein belongs to the G-protein coupled receptor 1 family. In terms of tissue distribution, expressed in 1-4% of neurons of the vomeronasal organ. Only one pheromone receptor gene may be expressed in a particular neuron. Not expressed in the main olfactory epithelium.

It localises to the cell membrane. In terms of biological role, putative pheromone receptor implicated in the regulation of social as well as reproductive behavior. The polypeptide is Vomeronasal type-1 receptor 102 (Vom1r102) (Rattus norvegicus (Rat)).